Consider the following 1431-residue polypeptide: Stabilin-2 (1431 aa).

At serine 1 to serine 1322 the chain is on the extracellular side. Residues leucine 2 to leucine 130 enclose the FAS1 domain. Residues asparagine 112 and asparagine 140 are each glycosylated (N-linked (GlcNAc...) asparagine). The 66-residue stretch at proline 207 to glutamine 272 folds into the Laminin EGF-like 1 domain. 18 cysteine pairs are disulfide-bonded: cysteine 212-cysteine 226, cysteine 220-cysteine 236, cysteine 238-cysteine 247, cysteine 259-cysteine 270, cysteine 263-cysteine 280, cysteine 282-cysteine 291, cysteine 300-cysteine 310, cysteine 304-cysteine 320, cysteine 322-cysteine 333, cysteine 339-cysteine 352, cysteine 346-cysteine 362, cysteine 364-cysteine 375, cysteine 381-cysteine 394, cysteine 388-cysteine 404, cysteine 406-cysteine 417, cysteine 423-cysteine 436, cysteine 430-cysteine 446, and cysteine 448-cysteine 459. Asparagine 231 and asparagine 243 each carry an N-linked (GlcNAc...) asparagine glycan. 4 EGF-like domains span residues threonine 296 to threonine 334, alanine 335 to leucine 376, glutamate 377 to serine 418, and leucine 419 to arginine 460. Asparagine 301 carries N-linked (GlcNAc...) asparagine glycosylation. Asparagine 329 carries N-linked (GlcNAc...) asparagine glycosylation. N-linked (GlcNAc...) asparagine glycosylation is present at asparagine 437. 2 FAS1 domains span residues arginine 460–leucine 588 and valine 604–leucine 745. A glycan (N-linked (GlcNAc...) asparagine) is linked at asparagine 607. The Laminin EGF-like 2 domain occupies proline 822–glutamate 887. Cystine bridges form between cysteine 827-cysteine 841, cysteine 835-cysteine 851, cysteine 853-cysteine 862, cysteine 874-cysteine 885, cysteine 879-cysteine 895, and cysteine 897-cysteine 906. The N-linked (GlcNAc...) asparagine glycan is linked to asparagine 858. Asparagine 929 carries an N-linked (GlcNAc...) asparagine glycan. 2 consecutive EGF-like domains span residues valine 947–isoleucine 987 and glutamate 988–glutamate 1030. Cystine bridges form between cysteine 951–cysteine 964, cysteine 958–cysteine 973, cysteine 975–cysteine 986, cysteine 992–cysteine 1006, cysteine 1000–cysteine 1016, cysteine 1018–cysteine 1029, cysteine 1085–cysteine 1154, and cysteine 1109–cysteine 1130. The region spanning glycine 1063–arginine 1156 is the Link domain. 5 N-linked (GlcNAc...) asparagine glycosylation sites follow: asparagine 1145, asparagine 1161, asparagine 1233, asparagine 1249, and asparagine 1258. In terms of domain architecture, FAS1 4 spans serine 1176–leucine 1310. The chain crosses the membrane as a helical span at residues glycine 1323–alanine 1343. Residues tyrosine 1344–arginine 1431 are Cytoplasmic-facing. Residues tryptophan 1368–serine 1378 form an interaction with TMSB4X region.

Interacts with GULP1, heparin, alpha-M/beta-2 integrin (ITGAM and ITGB2), and thymosin beta 4 (TMSB4X). In terms of processing, glycosylated. Post-translationally, proteolytically processed to yield a 175 kDa protein. In terms of tissue distribution, initially expressed in all vascular cells, including those of sinusoidal-like structures, vitellin veins, and hepatic veins or sinus venosus, in E13.5 fetal liver. The expression then progressively disappears in the portal and hepatic veins, but the expression in sinusoidals endothelial cells (SECs) is retained and becomes stronger during development.

Its subcellular location is the cytoplasm. The protein resides in the cell membrane. Its function is as follows. Phosphatidylserine receptor that enhances the engulfment of apoptotic cells. Hyaluronan receptor that binds to and mediates endocytosis of hyaluronic acid (HA). Also acts, in different species, as a primary systemic scavenger receptor for heparin (Hep), chondroitin sulfate (CS), dermatan sulfate (DS), nonglycosaminoglycan (GAG), acetylated low-density lipoprotein (AcLDL), pro-collagen propeptides and advanced glycation end products (AGE). May serve to maintain tissue integrity by supporting extracellular matrix turnover or it may contribute to maintaining fluidity of bodily liquids by resorption of hyaluronan. Counter receptor which plays an important role in lymphocyte recruitment in the hepatic vasculature. Binds to both Gram-positive and Gram-negative bacteria and may play a role in defense against bacterial infection. The proteolytically processed 175 kDa form also functions as an endocytosis receptor for heparin internalization as well as HA and CS. This chain is Stabilin-2, found in Rattus norvegicus (Rat).